The sequence spans 34 residues: Potassium channel toxin alpha-KTx 18.2 (34 aa).

3 cysteine pairs are disulfide-bonded: Cys-7/Cys-26, Cys-12/Cys-31, and Cys-16/Cys-33.

Expressed by the venom gland.

Its subcellular location is the secreted. Functionally, reversibly blocks Shaker B potassium channels. The sequence is that of Potassium channel toxin alpha-KTx 18.2 from Tityus discrepans (Venezuelan scorpion).